Consider the following 222-residue polypeptide: Vesicle-associated membrane protein 724 (222 aa).

At 1–197 the chain is on the cytoplasmic side; that stretch reads MGQESFIYSF…LWYQNMKIKL (197 aa). In terms of domain architecture, Longin spans 10 to 115; sequence FVARGTMILA…SLNKEFGPVM (106 aa). One can recognise a v-SNARE coiled-coil homology domain in the interval 131–191; sequence KLIKVKAQVS…TQVRRKLWYQ (61 aa). Residues 198–218 traverse the membrane as a helical; Anchor for type IV membrane protein segment; the sequence is VVLGILLLLVLIIWISVCHGF. Over 219–222 the chain is Vesicular; it reads NCTD.

The protein belongs to the synaptobrevin family. Expressed in flowers, leaves, stems and roots.

The protein localises to the cell membrane. Its subcellular location is the early endosome membrane. Functionally, involved in the targeting and/or fusion of transport vesicles to their target membrane. The polypeptide is Vesicle-associated membrane protein 724 (Arabidopsis thaliana (Mouse-ear cress)).